Here is a 225-residue protein sequence, read N- to C-terminus: Phosphatidylserine decarboxylase proenzyme (225 aa).

Ser188 serves as the catalytic Schiff-base intermediate with substrate; via pyruvic acid. Ser188 carries the post-translational modification Pyruvic acid (Ser); by autocatalysis.

This sequence belongs to the phosphatidylserine decarboxylase family. PSD-A subfamily. Heterodimer of a large membrane-associated beta subunit and a small pyruvoyl-containing alpha subunit. Pyruvate is required as a cofactor. Post-translationally, is synthesized initially as an inactive proenzyme. Formation of the active enzyme involves a self-maturation process in which the active site pyruvoyl group is generated from an internal serine residue via an autocatalytic post-translational modification. Two non-identical subunits are generated from the proenzyme in this reaction, and the pyruvate is formed at the N-terminus of the alpha chain, which is derived from the carboxyl end of the proenzyme. The post-translation cleavage follows an unusual pathway, termed non-hydrolytic serinolysis, in which the side chain hydroxyl group of the serine supplies its oxygen atom to form the C-terminus of the beta chain, while the remainder of the serine residue undergoes an oxidative deamination to produce ammonia and the pyruvoyl prosthetic group on the alpha chain.

Its subcellular location is the cell membrane. It carries out the reaction a 1,2-diacyl-sn-glycero-3-phospho-L-serine + H(+) = a 1,2-diacyl-sn-glycero-3-phosphoethanolamine + CO2. It functions in the pathway phospholipid metabolism; phosphatidylethanolamine biosynthesis; phosphatidylethanolamine from CDP-diacylglycerol: step 2/2. Functionally, catalyzes the formation of phosphatidylethanolamine (PtdEtn) from phosphatidylserine (PtdSer). This Parvibaculum lavamentivorans (strain DS-1 / DSM 13023 / NCIMB 13966) protein is Phosphatidylserine decarboxylase proenzyme.